A 227-amino-acid chain; its full sequence is Cytochrome c oxidase subunit 2 (227 aa).

Topologically, residues 1–26 are mitochondrial intermembrane; it reads MSTWKNLFLQDSASPLMELLMCFHDH. The chain crosses the membrane as a helical span at residues 27–48; that stretch reads AMLILILITIMVSQMLLSMLFN. The Mitochondrial matrix portion of the chain corresponds to 49–62; that stretch reads KLSHRYLLEGQLIE. A helical membrane pass occupies residues 63–82; sequence TIWTIIPAIILILIALPSLR. Residues 83 to 227 lie on the Mitochondrial intermembrane side of the membrane; the sequence is LLYILDEINN…LFLNWVISKA (145 aa). Cu cation contacts are provided by histidine 161, cysteine 196, glutamate 198, cysteine 200, histidine 204, and methionine 207. Residue glutamate 198 coordinates Mg(2+).

The protein belongs to the cytochrome c oxidase subunit 2 family. In terms of assembly, component of the cytochrome c oxidase (complex IV, CIV), a multisubunit enzyme composed of a catalytic core of 3 subunits and several supernumerary subunits. The complex exists as a monomer or a dimer and forms supercomplexes (SCs) in the inner mitochondrial membrane with ubiquinol-cytochrome c oxidoreductase (cytochrome b-c1 complex, complex III, CIII). Cu cation serves as cofactor.

It is found in the mitochondrion inner membrane. It catalyses the reaction 4 Fe(II)-[cytochrome c] + O2 + 8 H(+)(in) = 4 Fe(III)-[cytochrome c] + 2 H2O + 4 H(+)(out). In terms of biological role, component of the cytochrome c oxidase, the last enzyme in the mitochondrial electron transport chain which drives oxidative phosphorylation. The respiratory chain contains 3 multisubunit complexes succinate dehydrogenase (complex II, CII), ubiquinol-cytochrome c oxidoreductase (cytochrome b-c1 complex, complex III, CIII) and cytochrome c oxidase (complex IV, CIV), that cooperate to transfer electrons derived from NADH and succinate to molecular oxygen, creating an electrochemical gradient over the inner membrane that drives transmembrane transport and the ATP synthase. Cytochrome c oxidase is the component of the respiratory chain that catalyzes the reduction of oxygen to water. Electrons originating from reduced cytochrome c in the intermembrane space (IMS) are transferred via the dinuclear copper A center (CU(A)) of subunit 2 and heme A of subunit 1 to the active site in subunit 1, a binuclear center (BNC) formed by heme A3 and copper B (CU(B)). The BNC reduces molecular oxygen to 2 water molecules using 4 electrons from cytochrome c in the IMS and 4 protons from the mitochondrial matrix. In Sitophilus granarius (Granary weevil), this protein is Cytochrome c oxidase subunit 2 (COII).